Consider the following 313-residue polypeptide: Homoserine O-succinyltransferase (313 aa).

C142 functions as the Acyl-thioester intermediate in the catalytic mechanism. Residues K163 and S192 each coordinate substrate. The active-site Proton acceptor is the H235. E237 is an active-site residue. R249 provides a ligand contact to substrate.

It belongs to the MetA family.

The protein resides in the cytoplasm. The enzyme catalyses L-homoserine + succinyl-CoA = O-succinyl-L-homoserine + CoA. Its pathway is amino-acid biosynthesis; L-methionine biosynthesis via de novo pathway; O-succinyl-L-homoserine from L-homoserine: step 1/1. Transfers a succinyl group from succinyl-CoA to L-homoserine, forming succinyl-L-homoserine. The polypeptide is Homoserine O-succinyltransferase (Vibrio campbellii (strain ATCC BAA-1116)).